The sequence spans 870 residues: MTKLTPMMRQYLDIKAQYPDAILFFRLGDFYEMFMEDAVTASRILDITLTSRNKGAAEEVPLCGIPYHSCQPYVARLVEAGHKVAICEQVEDPKTVKGIVKREVVRVVTPGLVVDADTLTPKENNFLAAIAVSAQERYGIAVLDITTGEFRVTEVEGREAACSEVVSLQPREILVSEDQQQFCEQLLQGASGSWLINPLPDWVCDLEACGQRLQSFFNCGSLESFGCARLPEAVRAAGGVVYYVEQTQKGVAGHIRPLVTYHSRDYMVLDNSTRRNLELTATLQDGGRKGSLLGVLDRTVTAMGGRKIRQWIHHPLVDLKAIRDRHLSVQELVGQSLVRGDLRADLDGVYDLERLNSKIAMGHANAKDLVALRKSFEKLPRILQHLDELSAPLAAGIGSRIDPLTDMAELIGRAIVEDPPFVLREGGLMCDGYHLELDELRDIRRNGKEWIAKLEADERERTGIGSLKVRFNKVFGYYIEVTRTHLGRVPEDYQRKQTLANAERFFTPQLKEYEEKVLGAEDRLFDLEFELFQDLRERVAEQGERVQRTAEALAELDVLLSLADVAHSCDYVCPTMDDSDRLVIRDGRHPVIEAMNLGEHFVPNDVEMDCRENQIMVITGPNMAGKSTYMRQVALITLMAHMGSLVPAASAHIGLVDRIFTRVGASDNLAQGQSTFMVEMTEAAHILNHATSRSLIVLDEIGRGTSTFDGISIAWAVAEYLHDNGHVAAKTLFATHYHELTDLILTCERVKNLNIAVREWNEQIIFLRKIVKGPASHSYGIQVARLAGLPVAVIDRAKEILVNLESGELAEEGQPRLAQRAGGGQHRPNPQMSLFDAAADPVREKLAALDISTISPLEGLNFLHELQKLV.

An ATP-binding site is contributed by 620–627; it reads GPNMAGKS.

Belongs to the DNA mismatch repair MutS family.

Functionally, this protein is involved in the repair of mismatches in DNA. It is possible that it carries out the mismatch recognition step. This protein has a weak ATPase activity. The protein is DNA mismatch repair protein MutS of Syntrophotalea carbinolica (strain DSM 2380 / NBRC 103641 / GraBd1) (Pelobacter carbinolicus).